A 175-amino-acid chain; its full sequence is NADH-ubiquinone oxidoreductase chain 6 (175 aa).

5 helical membrane-spanning segments follow: residues 1–21 (MMMY…VGVS), 25–45 (SPIY…GVIL), 47–67 (FGGS…MLVV), 88–108 (VVLG…IYAL), and 149–169 (YGVW…VIIM).

This sequence belongs to the complex I subunit 6 family. In terms of assembly, core subunit of respiratory chain NADH dehydrogenase (Complex I) which is composed of 45 different subunits.

It localises to the mitochondrion inner membrane. It carries out the reaction a ubiquinone + NADH + 5 H(+)(in) = a ubiquinol + NAD(+) + 4 H(+)(out). Its function is as follows. Core subunit of the mitochondrial membrane respiratory chain NADH dehydrogenase (Complex I) which catalyzes electron transfer from NADH through the respiratory chain, using ubiquinone as an electron acceptor. Essential for the catalytic activity and assembly of complex I. The chain is NADH-ubiquinone oxidoreductase chain 6 (MT-ND6) from Balaenoptera physalus (Fin whale).